The chain runs to 89 residues: Defensin-like protein 250 (89 aa).

The N-terminal stretch at 1–23 (MKLAAIFLVSCVLLSLLPSLTIA) is a signal peptide. Intrachain disulfides connect cysteine 29/cysteine 86, cysteine 40/cysteine 69, cysteine 48/cysteine 79, and cysteine 67/cysteine 81.

Belongs to the DEFL family.

The protein resides in the secreted. This Arabidopsis thaliana (Mouse-ear cress) protein is Defensin-like protein 250 (SCRL8).